The primary structure comprises 364 residues: UDP-3-O-acylglucosamine N-acyltransferase (364 aa).

The Proton acceptor role is filled by His-258.

The protein belongs to the transferase hexapeptide repeat family. LpxD subfamily. As to quaternary structure, homotrimer.

It carries out the reaction a UDP-3-O-[(3R)-3-hydroxyacyl]-alpha-D-glucosamine + a (3R)-hydroxyacyl-[ACP] = a UDP-2-N,3-O-bis[(3R)-3-hydroxyacyl]-alpha-D-glucosamine + holo-[ACP] + H(+). It participates in bacterial outer membrane biogenesis; LPS lipid A biosynthesis. Catalyzes the N-acylation of UDP-3-O-acylglucosamine using 3-hydroxyacyl-ACP as the acyl donor. Is involved in the biosynthesis of lipid A, a phosphorylated glycolipid that anchors the lipopolysaccharide to the outer membrane of the cell. The polypeptide is UDP-3-O-acylglucosamine N-acyltransferase (Burkholderia orbicola (strain MC0-3)).